We begin with the raw amino-acid sequence, 298 residues long: Nucleotide-binding protein RSKD131_3085 (298 aa).

11-18 (GPSGAGRT) provides a ligand contact to ATP. 58–61 (DVRN) provides a ligand contact to GTP.

The protein belongs to the RapZ-like family.

In terms of biological role, displays ATPase and GTPase activities. The chain is Nucleotide-binding protein RSKD131_3085 from Cereibacter sphaeroides (strain KD131 / KCTC 12085) (Rhodobacter sphaeroides).